The sequence spans 612 residues: Dihydroxy-acid dehydratase (612 aa).

D81 is a Mg(2+) binding site. Residue C122 coordinates [2Fe-2S] cluster. Mg(2+) contacts are provided by D123 and K124. An N6-carboxylysine modification is found at K124. Position 195 (C195) interacts with [2Fe-2S] cluster. E491 contacts Mg(2+). S517 acts as the Proton acceptor in catalysis.

The protein belongs to the IlvD/Edd family. As to quaternary structure, homodimer. Requires [2Fe-2S] cluster as cofactor. It depends on Mg(2+) as a cofactor.

It carries out the reaction (2R)-2,3-dihydroxy-3-methylbutanoate = 3-methyl-2-oxobutanoate + H2O. The enzyme catalyses (2R,3R)-2,3-dihydroxy-3-methylpentanoate = (S)-3-methyl-2-oxopentanoate + H2O. The protein operates within amino-acid biosynthesis; L-isoleucine biosynthesis; L-isoleucine from 2-oxobutanoate: step 3/4. Its pathway is amino-acid biosynthesis; L-valine biosynthesis; L-valine from pyruvate: step 3/4. Functions in the biosynthesis of branched-chain amino acids. Catalyzes the dehydration of (2R,3R)-2,3-dihydroxy-3-methylpentanoate (2,3-dihydroxy-3-methylvalerate) into 2-oxo-3-methylpentanoate (2-oxo-3-methylvalerate) and of (2R)-2,3-dihydroxy-3-methylbutanoate (2,3-dihydroxyisovalerate) into 2-oxo-3-methylbutanoate (2-oxoisovalerate), the penultimate precursor to L-isoleucine and L-valine, respectively. The chain is Dihydroxy-acid dehydratase from Psychromonas ingrahamii (strain DSM 17664 / CCUG 51855 / 37).